The following is a 97-amino-acid chain: Large ribosomal subunit protein uL23 (97 aa).

It belongs to the universal ribosomal protein uL23 family. In terms of assembly, part of the 50S ribosomal subunit. Contacts protein L29, and trigger factor when it is bound to the ribosome.

Its function is as follows. One of the early assembly proteins it binds 23S rRNA. One of the proteins that surrounds the polypeptide exit tunnel on the outside of the ribosome. Forms the main docking site for trigger factor binding to the ribosome. In Allorhizobium ampelinum (strain ATCC BAA-846 / DSM 112012 / S4) (Agrobacterium vitis (strain S4)), this protein is Large ribosomal subunit protein uL23.